The primary structure comprises 443 residues: MRSSRYFLPVLKEAPSDAQIVSHQLMLRAGMIRQEAAGIYAWLPLGLRVLNKIEQIVREEMDRAGAIELLMPTIQLADLWRESGRYDDYGDEMLRITDRHKRELLFGPTAEEVVTDIFRASIKSYKDLPKNLYNIQWKFRDERRPRFGVMRGREFLMKDAYSFDLDADGARKSYNRMFVAYLNLFARMGLKAVPMRADTGPIGGDLSHEFIVLAETGESAVFCHKDLVEMPAPGPDLDWINGDLQPLVNQRTALYAATEEMHDEAAFNALPEGDRLSARGIEVGHIFSFGTKYSEPMKATVQGPDGQQVPVQMGSYGVGVSRLLGAIIEASHDEGGIIWPESVAPFDVGIVNMRQGDAACDAACETAYNALKAAGREVLYDDTDARGGAKFATMDLIGLPWQLIVGPKGIAEGVVEIKHRKTGERHTASLESVLDGLTKSKTT.

This sequence belongs to the class-II aminoacyl-tRNA synthetase family. ProS type 2 subfamily. As to quaternary structure, homodimer.

The protein localises to the cytoplasm. It catalyses the reaction tRNA(Pro) + L-proline + ATP = L-prolyl-tRNA(Pro) + AMP + diphosphate. In terms of biological role, catalyzes the attachment of proline to tRNA(Pro) in a two-step reaction: proline is first activated by ATP to form Pro-AMP and then transferred to the acceptor end of tRNA(Pro). The sequence is that of Proline--tRNA ligase from Caulobacter vibrioides (strain ATCC 19089 / CIP 103742 / CB 15) (Caulobacter crescentus).